Reading from the N-terminus, the 331-residue chain is Centriolar satellite-associated tubulin polyglutamylase complex regulator 1 (331 aa).

The required for interaction with PCM1 stretch occupies residues 1–111 (MLSPERLALP…HCLLQLLCPD (111 aa)). Residues 1-225 (MLSPERLALP…SCPPPALVKE (225 aa)) are required for interaction with TPGS1, LRRC49, and TTLL1. A required for interaction with TPGS2 region spans residues 112-331 (FPLELTQKAA…STEETDESET (220 aa)). The disordered stretch occupies residues 292 to 331 (SCLPSRTPPRVGSPWKPLHRSRKLDAESDGSTEETDESET). A compositionally biased stretch (acidic residues) spans 318 to 331 (ESDGSTEETDESET). Residue Ser-319 is modified to Phosphoserine.

Belongs to the CSTPP1 family. In terms of assembly, interacts with PCM1. Interacts with TTLL1, TPGS1, TPGS2 and LRRC49; the interactions link CSTPP1 to the complex TPGC. Binds to alpha-tubulin.

The protein resides in the cytoplasm. It localises to the cytoskeleton. It is found in the microtubule organizing center. Its subcellular location is the centrosome. The protein localises to the centriolar satellite. Regulator of the tubulin polyglutamylase complex (TPGC) that controls cytoskeletal organization, nuclear shape, and cilium disassembly by balancing microtubule and actin assembly. Regulates the assembly and stability of the TPGC and thereby modulates polyglutamylation of the microtubule, which antagonizes MAP4 binding. This chain is Centriolar satellite-associated tubulin polyglutamylase complex regulator 1, found in Mus musculus (Mouse).